The following is a 484-amino-acid chain: tRNA sulfurtransferase (484 aa).

A THUMP domain is found at 63-167; that stretch reads EAFAERLACI…NDNLYLIDKR (105 aa). ATP is bound by residues 185–186, K267, G289, and Q298; that span reads LI. C346 and C458 are disulfide-bonded. The region spanning 406 to 484 is the Rhodanese domain; the sequence is ISAGEIIIDV…GYNNVKVYRP (79 aa). Residue C458 is the Cysteine persulfide intermediate of the active site.

This sequence belongs to the ThiI family.

The protein localises to the cytoplasm. The enzyme catalyses [ThiI sulfur-carrier protein]-S-sulfanyl-L-cysteine + a uridine in tRNA + 2 reduced [2Fe-2S]-[ferredoxin] + ATP + H(+) = [ThiI sulfur-carrier protein]-L-cysteine + a 4-thiouridine in tRNA + 2 oxidized [2Fe-2S]-[ferredoxin] + AMP + diphosphate. It catalyses the reaction [ThiS sulfur-carrier protein]-C-terminal Gly-Gly-AMP + S-sulfanyl-L-cysteinyl-[cysteine desulfurase] + AH2 = [ThiS sulfur-carrier protein]-C-terminal-Gly-aminoethanethioate + L-cysteinyl-[cysteine desulfurase] + A + AMP + 2 H(+). It participates in cofactor biosynthesis; thiamine diphosphate biosynthesis. Functionally, catalyzes the ATP-dependent transfer of a sulfur to tRNA to produce 4-thiouridine in position 8 of tRNAs, which functions as a near-UV photosensor. Also catalyzes the transfer of sulfur to the sulfur carrier protein ThiS, forming ThiS-thiocarboxylate. This is a step in the synthesis of thiazole, in the thiamine biosynthesis pathway. The sulfur is donated as persulfide by IscS. The chain is tRNA sulfurtransferase from Shewanella pealeana (strain ATCC 700345 / ANG-SQ1).